The primary structure comprises 54 residues: uncharacterized protein (54 aa).

The disordered stretch occupies residues 1-54 (MSKKSTPMTKDAASRIQSSAAKSGGDVSSGSFASRAQSAAAINANNTSNSTGKK). The segment covering 28-54 (SSGSFASRAQSAAAINANNTSNSTGKK) has biased composition (low complexity).

This is an uncharacterized protein from Dictyostelium discoideum (Social amoeba).